Consider the following 183-residue polypeptide: Tumor necrosis factor ligand superfamily member 4 (183 aa).

Residues 1–23 are Cytoplasmic-facing; it reads MERVQPLEENVGNAARPRFERNK. The chain crosses the membrane as a helical; Signal-anchor for type II membrane protein span at residues 24 to 50; sequence LLLVASVIQGLGLLLCFTYICLHFSAL. The region spanning 51–173 is the THD domain; sequence QVSHRYPRIQ…HVNGGELILI (123 aa). Topologically, residues 51–183 are extracellular; that stretch reads QVSHRYPRIQ…HQNPGEFCVL (133 aa). Asn-90, Asn-114, Asn-152, and Asn-157 each carry an N-linked (GlcNAc...) asparagine glycan. Cys-97 and Cys-181 form a disulfide bridge.

This sequence belongs to the tumor necrosis factor family. Homotrimer.

It localises to the membrane. In terms of biological role, cytokine that binds to TNFRSF4. Co-stimulates T-cell proliferation and cytokine production. This is Tumor necrosis factor ligand superfamily member 4 (TNFSF4) from Homo sapiens (Human).